The chain runs to 251 residues: Imidazole glycerol phosphate synthase subunit HisF (251 aa).

Active-site residues include Asp11 and Asp130.

This sequence belongs to the HisA/HisF family. In terms of assembly, heterodimer of HisH and HisF.

The protein resides in the cytoplasm. The catalysed reaction is 5-[(5-phospho-1-deoxy-D-ribulos-1-ylimino)methylamino]-1-(5-phospho-beta-D-ribosyl)imidazole-4-carboxamide + L-glutamine = D-erythro-1-(imidazol-4-yl)glycerol 3-phosphate + 5-amino-1-(5-phospho-beta-D-ribosyl)imidazole-4-carboxamide + L-glutamate + H(+). The protein operates within amino-acid biosynthesis; L-histidine biosynthesis; L-histidine from 5-phospho-alpha-D-ribose 1-diphosphate: step 5/9. Its function is as follows. IGPS catalyzes the conversion of PRFAR and glutamine to IGP, AICAR and glutamate. The HisF subunit catalyzes the cyclization activity that produces IGP and AICAR from PRFAR using the ammonia provided by the HisH subunit. This chain is Imidazole glycerol phosphate synthase subunit HisF, found in Chlorobaculum parvum (strain DSM 263 / NCIMB 8327) (Chlorobium vibrioforme subsp. thiosulfatophilum).